We begin with the raw amino-acid sequence, 53 residues long: Mitochondrial sheath formation-associated protein (53 aa).

Mitochondrial intermembrane-facing segments span residues 1 to 6 and 1 to 7; these read MIVLGW and MIVLGWM. Transmembrane regions (helical) follow at residues 7–23 and 8–24; these read MLFVGLATYMGTFPEAM and LFVGLATYMGTFPEAMP. Cytoplasmic segments lie at residues 24–53 and 25–40; these read PPTLKWKERLPGQENKARRRIQALEEELLL and PTLKWKERLPGQENKA.

In terms of assembly, interacts with VDAC3. Testis specific. Detected only in germ cells at the step of spermiogenesis (at protein level). Expressed during the middle steps of spermatid development. As to expression, testis specific. Detected only in germ cells at the step of spermiogenesis (at protein level). Expressed in the late steps of spermatid development.

Its subcellular location is the mitochondrion outer membrane. Its function is as follows. Regulates sperm development. May be involved in mitochondrial sheath formation. In Mus musculus (Mouse), this protein is Mitochondrial sheath formation-associated protein.